Here is a 455-residue protein sequence, read N- to C-terminus: tRNA modification GTPase MnmE (455 aa).

(6S)-5-formyl-5,6,7,8-tetrahydrofolate-binding residues include arginine 24, glutamate 81, and lysine 120. The region spanning 216 to 378 (GMTVVIAGRP…LREHLKACMG (163 aa)) is the TrmE-type G domain. Asparagine 226 is a K(+) binding site. Residues 226–231 (NAGKSS), 245–251 (TDIAGTT), 270–273 (DTAG), 335–338 (NKAD), and 359–361 (SAR) each bind GTP. Residue serine 230 participates in Mg(2+) binding. K(+)-binding residues include threonine 245, isoleucine 247, and threonine 250. Position 251 (threonine 251) interacts with Mg(2+). Position 455 (lysine 455) interacts with (6S)-5-formyl-5,6,7,8-tetrahydrofolate.

This sequence belongs to the TRAFAC class TrmE-Era-EngA-EngB-Septin-like GTPase superfamily. TrmE GTPase family. Homodimer. Heterotetramer of two MnmE and two MnmG subunits. K(+) is required as a cofactor.

Its subcellular location is the cytoplasm. In terms of biological role, exhibits a very high intrinsic GTPase hydrolysis rate. Involved in the addition of a carboxymethylaminomethyl (cmnm) group at the wobble position (U34) of certain tRNAs, forming tRNA-cmnm(5)s(2)U34. This chain is tRNA modification GTPase MnmE, found in Pseudomonas aeruginosa (strain UCBPP-PA14).